A 178-amino-acid polypeptide reads, in one-letter code: Cytochrome b6-f complex iron-sulfur subunit (178 aa).

Residues 20–42 (LLTFGSVTGVALGALYPVVNYFI) form a helical membrane-spanning segment. One can recognise a Rieske domain in the interval 65–161 (ASGWLADHKE…VNVENDNVFV (97 aa)). Positions 107, 109, 125, and 128 each coordinate [2Fe-2S] cluster. Residues Cys112 and Cys127 are joined by a disulfide bond.

This sequence belongs to the Rieske iron-sulfur protein family. The 4 large subunits of the cytochrome b6-f complex are cytochrome b6, subunit IV (17 kDa polypeptide, PetD), cytochrome f and the Rieske protein, while the 4 small subunits are PetG, PetL, PetM and PetN. The complex functions as a dimer. Requires [2Fe-2S] cluster as cofactor.

It localises to the cellular thylakoid membrane. The catalysed reaction is 2 oxidized [plastocyanin] + a plastoquinol + 2 H(+)(in) = 2 reduced [plastocyanin] + a plastoquinone + 4 H(+)(out). Component of the cytochrome b6-f complex, which mediates electron transfer between photosystem II (PSII) and photosystem I (PSI), cyclic electron flow around PSI, and state transitions. This Synechococcus sp. (strain RCC307) protein is Cytochrome b6-f complex iron-sulfur subunit.